A 139-amino-acid polypeptide reads, in one-letter code: Small ribosomal subunit protein uS11 (139 aa).

The tract at residues 1-33 (MPPAKKGPATSARKGQKTRRREKKNVPHGAAHI) is disordered. Basic residues predominate over residues 14–23 (KGQKTRRREK).

The protein belongs to the universal ribosomal protein uS11 family. As to quaternary structure, part of the 30S ribosomal subunit. Interacts with proteins S7 and S18. Binds to IF-3.

Located on the platform of the 30S subunit, it bridges several disparate RNA helices of the 16S rRNA. Forms part of the Shine-Dalgarno cleft in the 70S ribosome. This Mycobacterium bovis (strain ATCC BAA-935 / AF2122/97) protein is Small ribosomal subunit protein uS11.